Here is a 414-residue protein sequence, read N- to C-terminus: Ornithine aminotransferase (414 aa).

Cys154 and Cys163 form a disulfide bridge. Lys262 carries the post-translational modification N6-(pyridoxal phosphate)lysine.

It belongs to the class-III pyridoxal-phosphate-dependent aminotransferase family. As to quaternary structure, homodimer. It depends on pyridoxal 5'-phosphate as a cofactor. The disulfide bond between Cys-154 and Cys-163 is reduced by TRX1 which increases OAT catalytic activity.

Its subcellular location is the cytoplasm. It carries out the reaction a 2-oxocarboxylate + L-ornithine = L-glutamate 5-semialdehyde + an L-alpha-amino acid. It catalyses the reaction L-ornithine + 2-oxoglutarate = L-glutamate 5-semialdehyde + L-glutamate. Its pathway is amino-acid biosynthesis; L-proline biosynthesis; L-glutamate 5-semialdehyde from L-ornithine: step 1/1. Its activity is regulated as follows. Unlike for mammalian OATs, activity is increased by TRX1-mediated reduction of the disulfide bond between Cys-154 and Cys-163. Binding to TRX1 may also induce conformational changes that facilitate substrate binding. Its function is as follows. Catalyzes the transamination of alpha-ketoglutarate with ornithine or N-acetylornithine and of glutamate-5-semialdehyde with glutamate and alanine. In Plasmodium chabaudi chabaudi, this protein is Ornithine aminotransferase.